Reading from the N-terminus, the 140-residue chain is Myelodysplastic syndrome 2 translocation-associated protein (140 aa).

As to expression, highly expressed in peripheral blood leukocytes, spleen, thymus, kidney, pancreas and lung.

The sequence is that of Myelodysplastic syndrome 2 translocation-associated protein (MDS2) from Homo sapiens (Human).